The sequence spans 27 residues: Pregnancy-associated glycoprotein 55 (27 aa).

Belongs to the peptidase A1 family. Post-translationally, glycosylated. In terms of tissue distribution, placenta.

The sequence is that of Pregnancy-associated glycoprotein 55 (PAG55) from Capra hircus (Goat).